Here is a 71-residue protein sequence, read N- to C-terminus: uncharacterized protein (71 aa).

Residues 37-57 (IGVGVSDGVSAGVGVGVAMII) form a helical membrane-spanning segment.

It is found in the membrane. This is an uncharacterized protein from Dictyostelium discoideum (Social amoeba).